Here is a 290-residue protein sequence, read N- to C-terminus: Acetyl-coenzyme A carboxylase carboxyl transferase subunit beta (290 aa).

Residues 28–290 (IMTKCPKCKK…SRGGDEWHTN (263 aa)) enclose the CoA carboxyltransferase N-terminal domain. Zn(2+) contacts are provided by Cys32, Cys35, Cys51, and Cys54. The segment at 32 to 54 (CPKCKKIMYTKELVKNLRVCISC) adopts a C4-type zinc-finger fold.

Belongs to the AccD/PCCB family. As to quaternary structure, acetyl-CoA carboxylase is a heterohexamer composed of biotin carboxyl carrier protein (AccB), biotin carboxylase (AccC) and two subunits each of ACCase subunit alpha (AccA) and ACCase subunit beta (AccD). Zn(2+) serves as cofactor.

The protein localises to the cytoplasm. The catalysed reaction is N(6)-carboxybiotinyl-L-lysyl-[protein] + acetyl-CoA = N(6)-biotinyl-L-lysyl-[protein] + malonyl-CoA. It functions in the pathway lipid metabolism; malonyl-CoA biosynthesis; malonyl-CoA from acetyl-CoA: step 1/1. Its function is as follows. Component of the acetyl coenzyme A carboxylase (ACC) complex. Biotin carboxylase (BC) catalyzes the carboxylation of biotin on its carrier protein (BCCP) and then the CO(2) group is transferred by the transcarboxylase to acetyl-CoA to form malonyl-CoA. This is Acetyl-coenzyme A carboxylase carboxyl transferase subunit beta from Anoxybacillus flavithermus (strain DSM 21510 / WK1).